Reading from the N-terminus, the 98-residue chain is NADH-ubiquinone oxidoreductase chain 4L (98 aa).

A run of 2 helical transmembrane segments spans residues 26–46 (LVASLLCLEGMMMSLFIMATL) and 61–81 (IILLVFAACEAAVGLALLISI).

The protein belongs to the complex I subunit 4L family. Core subunit of respiratory chain NADH dehydrogenase (Complex I) which is composed of 45 different subunits.

It is found in the mitochondrion inner membrane. The catalysed reaction is a ubiquinone + NADH + 5 H(+)(in) = a ubiquinol + NAD(+) + 4 H(+)(out). Functionally, core subunit of the mitochondrial membrane respiratory chain NADH dehydrogenase (Complex I) which catalyzes electron transfer from NADH through the respiratory chain, using ubiquinone as an electron acceptor. Part of the enzyme membrane arm which is embedded in the lipid bilayer and involved in proton translocation. This Macaca nigrescens (Gorontalo macaque) protein is NADH-ubiquinone oxidoreductase chain 4L (MT-ND4L).